The primary structure comprises 616 residues: Glycoprotein Q1 (616 aa).

Residues 1 to 24 (MRPPRRSAPILVCAISMATALSNA) form the signal peptide. N-linked (GlcNAc...) asparagine; by host glycosylation is found at N23, N44, N282, N330, and N351.

As to quaternary structure, interacts with isoform gQ2. The heterodimer gQ1-gQ2 associates with the glycoprotein complex gH-gL to form a tetrameric complex. The gH/gL/gQ1/gQ2 complex binds to host TNFRSF4. Post-translationally, glycosylated by host.

It localises to the virion. It is found in the host endoplasmic reticulum lumen. Plays a role in virus entry by participating in host receptor binding at the cell surface. In Homo sapiens (Human), this protein is Glycoprotein Q1.